Consider the following 148-residue polypeptide: Aspartate 1-decarboxylase (148 aa).

S25 functions as the Schiff-base intermediate with substrate; via pyruvic acid in the catalytic mechanism. S25 bears the Pyruvic acid (Ser) mark. T57 is a substrate binding site. Y58 acts as the Proton donor in catalysis. G73–A75 serves as a coordination point for substrate.

Belongs to the PanD family. In terms of assembly, heterooctamer of four alpha and four beta subunits. Pyruvate serves as cofactor. In terms of processing, is synthesized initially as an inactive proenzyme, which is activated by self-cleavage at a specific serine bond to produce a beta-subunit with a hydroxyl group at its C-terminus and an alpha-subunit with a pyruvoyl group at its N-terminus.

Its subcellular location is the cytoplasm. The catalysed reaction is L-aspartate + H(+) = beta-alanine + CO2. The protein operates within cofactor biosynthesis; (R)-pantothenate biosynthesis; beta-alanine from L-aspartate: step 1/1. Catalyzes the pyruvoyl-dependent decarboxylation of aspartate to produce beta-alanine. This is Aspartate 1-decarboxylase from Rhodococcus erythropolis (strain PR4 / NBRC 100887).